Reading from the N-terminus, the 378-residue chain is Coiled-coil domain-containing protein 74A (378 aa).

Disordered stretches follow at residues 1 to 52, 128 to 211, and 301 to 328; these read MSGA…RNLD, GGPS…EEPL, and EGSQ…PKVS. Polar residues predominate over residues 34–44; sequence LRPQSPQLRQS. A coiled-coil region spans residues 47–90; that stretch reads QKRNLDLEKSLQFLQQQHSEMLAKLHEEIEHLKRENKDLHYKLI. The segment covering 141–151 has biased composition (basic residues); it reads RTHRPGGKRGR. Residues 165–182 show a composition bias toward polar residues; sequence DSLSMSSFQSVKSISNSG. Basic and acidic residues-rich tracts occupy residues 194–205 and 314–323; these read QDSKADVSQKAD and SFPRDQEATH.

The chain is Coiled-coil domain-containing protein 74A (CCDC74A) from Homo sapiens (Human).